Here is a 233-residue protein sequence, read N- to C-terminus: Synaptogyrin-1 (233 aa).

Met1 bears the N-acetylmethionine mark. Over 1 to 23 (MEGGAYGAGKAGGAFDPYTLVRQ) the chain is Cytoplasmic. Residues 20–173 (LVRQPHTILR…QAVLAFQRYQ (154 aa)) form the MARVEL domain. Residues 24–44 (PHTILRVVSWLFSIVVFGSIV) form a helical membrane-spanning segment. Over 45-71 (NEGYLNSASEGEEFCIYNRNPNACSYG) the chain is Lumenal. A helical transmembrane segment spans residues 72-92 (VAVGVLAFLTCLLYLALDVYF). The Cytoplasmic portion of the chain corresponds to 93–103 (PQISSVKDRKK). Residues 104–124 (AVLSDIGVSAFWAFLWFVGFC) form a helical membrane-spanning segment. Topologically, residues 125-148 (YLANQWQVSKPKDNPLNEGTDAAR) are lumenal. A helical membrane pass occupies residues 149–169 (AAIAFSFFSIFTWAGQAVLAF). At 170-233 (QRYQIGADSA…EPQGYQSQGY (64 aa)) the chain is on the cytoplasmic side. The segment at 194-233 (MPYAPYVEPTGPDPAGMGGTYQQPANTFDTEPQGYQSQGY) is disordered. The span at 213 to 233 (TYQQPANTFDTEPQGYQSQGY) shows a compositional bias: polar residues.

This sequence belongs to the synaptogyrin family.

It localises to the cytoplasmic vesicle. Its subcellular location is the secretory vesicle. It is found in the synaptic vesicle membrane. The protein localises to the melanosome. May play a role in regulated exocytosis. Modulates the localization of synaptophysin/SYP into synaptic-like microvesicles and may therefore play a role in synaptic-like microvesicle formation and/or maturation. Involved in the regulation of short-term and long-term synaptic plasticity. The polypeptide is Synaptogyrin-1 (Homo sapiens (Human)).